We begin with the raw amino-acid sequence, 831 residues long: Leucine--tRNA ligase (831 aa).

Residues 35–45 carry the 'HIGH' region motif; it reads PYPSGKIHVGH. Residues 600–604 carry the 'KMSKS' region motif; that stretch reads KMSKS. Lys-603 serves as a coordination point for ATP.

This sequence belongs to the class-I aminoacyl-tRNA synthetase family.

It is found in the cytoplasm. The catalysed reaction is tRNA(Leu) + L-leucine + ATP = L-leucyl-tRNA(Leu) + AMP + diphosphate. The sequence is that of Leucine--tRNA ligase from Rickettsia bellii (strain RML369-C).